The sequence spans 216 residues: Peptide methionine sulfoxide reductase MsrA (216 aa).

Residue C54 is part of the active site.

This sequence belongs to the MsrA Met sulfoxide reductase family.

It carries out the reaction L-methionyl-[protein] + [thioredoxin]-disulfide + H2O = L-methionyl-(S)-S-oxide-[protein] + [thioredoxin]-dithiol. It catalyses the reaction [thioredoxin]-disulfide + L-methionine + H2O = L-methionine (S)-S-oxide + [thioredoxin]-dithiol. Its function is as follows. Has an important function as a repair enzyme for proteins that have been inactivated by oxidation. Catalyzes the reversible oxidation-reduction of methionine sulfoxide in proteins to methionine. This Xylella fastidiosa (strain M12) protein is Peptide methionine sulfoxide reductase MsrA.